A 446-amino-acid chain; its full sequence is Glucarate dehydratase (446 aa).

Residues H32, T103, Y150, and K205 each coordinate substrate. Catalysis depends on K207, which acts as the Proton acceptor. Residues D235, E266, and N289 each coordinate Mg(2+). Residue 235–237 (DPN) participates in substrate binding. Substrate contacts are provided by residues N289, 339–341 (HSN), H368, and R422. H339 functions as the Proton acceptor in the catalytic mechanism.

The protein belongs to the mandelate racemase/muconate lactonizing enzyme family. GlucD subfamily. Homodimer. The cofactor is Mg(2+).

The enzyme catalyses D-glucarate = 5-dehydro-4-deoxy-D-glucarate + H2O. Its pathway is carbohydrate acid metabolism; D-glucarate degradation; 2,5-dioxopentanoate from D-glucarate: step 1/2. Functionally, catalyzes the dehydration of glucarate to 5-keto-4-deoxy-D-glucarate (5-kdGluc). Also acts on L-idarate. The chain is Glucarate dehydratase (gudD) from Escherichia coli O157:H7.